A 574-amino-acid chain; its full sequence is G protein-coupled receptor kinase 4 (574 aa).

At Met1 the chain carries N-acetylmethionine. The N-terminal stretch occupies residues 1–153 (MELENFVANN…ECAGIVCKYL (153 aa)). An RGS domain is found at 51 to 171 (DFSSLCDKQP…QESTYFNRFL (121 aa)). Residues 186–448 (FRQYRVLGKG…VSAVKQHPIF (263 aa)) form the Protein kinase domain. ATP is bound by residues 192–200 (LGKGGFGEV) and Lys215. Asp311 serves as the catalytic Proton acceptor. The 66-residue stretch at 449–514 (KDINFSRLEA…GSVTIPWQNE (66 aa)) folds into the AGC-kinase C-terminal domain. At Ser484 the chain carries Phosphoserine.

Belongs to the protein kinase superfamily. AGC Ser/Thr protein kinase family. GPRK subfamily. Interacts with DRD3. Palmitoylated.

Its subcellular location is the cytoplasm. It localises to the cell cortex. The catalysed reaction is [G-protein-coupled receptor] + ATP = [G-protein-coupled receptor]-phosphate + ADP + H(+). With respect to regulation, inhibited by heparin. In terms of biological role, specifically phosphorylates the activated forms of G protein-coupled receptors. This Mus musculus (Mouse) protein is G protein-coupled receptor kinase 4 (Grk4).